The following is a 254-amino-acid chain: Ribosomal RNA small subunit methyltransferase G (254 aa).

S-adenosyl-L-methionine contacts are provided by residues Gly-84, Phe-89, 136 to 137 (VE), and Arg-155. Residues 231 to 254 (HLYPRAVGIPSKQPLGIQADDNRS) form a disordered region.

Belongs to the methyltransferase superfamily. RNA methyltransferase RsmG family.

The protein resides in the cytoplasm. Specifically methylates the N7 position of a guanine in 16S rRNA. This is Ribosomal RNA small subunit methyltransferase G from Synechococcus sp. (strain WH7803).